The following is a 447-amino-acid chain: 1-aminocyclopropane-1-carboxylate synthase 7 (447 aa).

Positions 61 and 100 each coordinate substrate. An N6-(pyridoxal phosphate)lysine modification is found at Lys-285.

Belongs to the class-I pyridoxal-phosphate-dependent aminotransferase family. In terms of assembly, homodimer and heterodimer. In vivo, the relevance of heterodimerization with other ACS enzymes is however unsure. Interacts with XBAT32. It depends on pyridoxal 5'-phosphate as a cofactor. In terms of processing, ubiquitinated by XBAT32. Ubiquitination probably leads to its subsequent degradation, thus controlling ethylene production. Expressed in roots.

The enzyme catalyses S-adenosyl-L-methionine = 1-aminocyclopropane-1-carboxylate + S-methyl-5'-thioadenosine + H(+). The protein operates within alkene biosynthesis; ethylene biosynthesis via S-adenosyl-L-methionine; ethylene from S-adenosyl-L-methionine: step 1/2. Functionally, 1-aminocyclopropane-1-carboxylate synthase (ACS) enzymes catalyze the conversion of S-adenosyl-L-methionine (SAM) into 1-aminocyclopropane-1-carboxylate (ACC), a direct precursor of ethylene. The chain is 1-aminocyclopropane-1-carboxylate synthase 7 (ACS7) from Arabidopsis thaliana (Mouse-ear cress).